The sequence spans 126 residues: Fluoride-specific ion channel FluC (126 aa).

Helical transmembrane passes span 1–21 (MIVIFVGLAGVLGALMRFGLD), 40–60 (LATLSVNVLGSFIIGLAGGFA), 72–92 (AISIGIAGGLTTFSSFAVATV), and 104–124 (MVNIGLNLVLGLGAAWLGLSL). 2 residues coordinate Na(+): Gly-79 and Thr-82.

This sequence belongs to the fluoride channel Fluc/FEX (TC 1.A.43) family.

It is found in the cell membrane. It carries out the reaction fluoride(in) = fluoride(out). With respect to regulation, na(+) is not transported, but it plays an essential structural role and its presence is essential for fluoride channel function. Its function is as follows. Fluoride-specific ion channel. Important for reducing fluoride concentration in the cell, thus reducing its toxicity. The sequence is that of Fluoride-specific ion channel FluC from Renibacterium salmoninarum (strain ATCC 33209 / DSM 20767 / JCM 11484 / NBRC 15589 / NCIMB 2235).